A 53-amino-acid chain; its full sequence is Large ribosomal subunit protein bL32c (53 aa).

The protein belongs to the bacterial ribosomal protein bL32 family.

It is found in the plastid. Its subcellular location is the chloroplast. The polypeptide is Large ribosomal subunit protein bL32c (Coffea arabica (Arabian coffee)).